Here is a 503-residue protein sequence, read N- to C-terminus: Glutamate--tRNA ligase (503 aa).

The short motif at P9–T19 is the 'HIGH' region element. A 'KMSKS' region motif is present at residues K251–R255. K254 serves as a coordination point for ATP.

Belongs to the class-I aminoacyl-tRNA synthetase family. Glutamate--tRNA ligase type 1 subfamily. As to quaternary structure, monomer.

Its subcellular location is the cytoplasm. The enzyme catalyses tRNA(Glu) + L-glutamate + ATP = L-glutamyl-tRNA(Glu) + AMP + diphosphate. Catalyzes the attachment of glutamate to tRNA(Glu) in a two-step reaction: glutamate is first activated by ATP to form Glu-AMP and then transferred to the acceptor end of tRNA(Glu). This is Glutamate--tRNA ligase from Saccharophagus degradans (strain 2-40 / ATCC 43961 / DSM 17024).